The following is a 974-amino-acid chain: Glycine dehydrogenase (decarboxylating) (974 aa).

K720 bears the N6-(pyridoxal phosphate)lysine mark.

The protein belongs to the GcvP family. As to quaternary structure, the glycine cleavage system is composed of four proteins: P, T, L and H. Pyridoxal 5'-phosphate is required as a cofactor.

The catalysed reaction is N(6)-[(R)-lipoyl]-L-lysyl-[glycine-cleavage complex H protein] + glycine + H(+) = N(6)-[(R)-S(8)-aminomethyldihydrolipoyl]-L-lysyl-[glycine-cleavage complex H protein] + CO2. Its function is as follows. The glycine cleavage system catalyzes the degradation of glycine. The P protein binds the alpha-amino group of glycine through its pyridoxal phosphate cofactor; CO(2) is released and the remaining methylamine moiety is then transferred to the lipoamide cofactor of the H protein. The protein is Glycine dehydrogenase (decarboxylating) of Cupriavidus metallidurans (strain ATCC 43123 / DSM 2839 / NBRC 102507 / CH34) (Ralstonia metallidurans).